The sequence spans 500 residues: Pyruvate kinase 1 (500 aa).

Ser2 bears the N-acetylserine mark. Ser9 and Ser16 each carry phosphoserine. The residue at position 31 (Thr31) is a Phosphothreonine. Arg49 contacts substrate. K(+) is bound by residues Asn51 and Ser53. ATP is bound at residue 51-54; the sequence is NFSH. Ser70 is modified (phosphoserine). Positions 84 and 85 each coordinate K(+). Residue Arg91 participates in ATP binding. Glycyl lysine isopeptide (Lys-Gly) (interchain with G-Cter in URM1) cross-links involve residues Lys119, Lys124, Lys161, Lys164, and Lys166. Residue Lys177 coordinates ATP. A Phosphothreonine modification is found at Thr184. Lys204 is covalently cross-linked (Glycyl lysine isopeptide (Lys-Gly) (interchain with G-Cter in ubiquitin)). Ser213 is subject to Phosphoserine. Lys240 serves as a coordination point for substrate. Glu242 lines the Mn(2+) pocket. Lys255 is covalently cross-linked (Glycyl lysine isopeptide (Lys-Gly) (interchain with G-Cter in ubiquitin)). Residues Gly265 and Asp266 each contribute to the substrate site. A Mn(2+)-binding site is contributed by Asp266. Residue Lys292 forms a Glycyl lysine isopeptide (Lys-Gly) (interchain with G-Cter in URM1) linkage. Residue Thr298 coordinates substrate. Ser316 is modified (phosphoserine). Residue Lys394 forms a Glycyl lysine isopeptide (Lys-Gly) (interchain with G-Cter in URM1) linkage. Residue 402 to 407 participates in beta-D-fructose 1,6-bisphosphate binding; the sequence is STSGTT. The residue at position 418 (Cys418) is a Cysteine persulfide. Lys446 participates in a covalent cross-link: Glycyl lysine isopeptide (Lys-Gly) (interchain with G-Cter in ubiquitin); alternate. A Glycyl lysine isopeptide (Lys-Gly) (interchain with G-Cter in URM1); alternate cross-link involves residue Lys446. Ser450 carries the phosphoserine modification. Beta-D-fructose 1,6-bisphosphate contacts are provided by Trp452 and Arg459. Thr478 is subject to Phosphothreonine. Gly484 serves as a coordination point for beta-D-fructose 1,6-bisphosphate.

This sequence belongs to the pyruvate kinase family. As to quaternary structure, homotetramer. The cofactor is Mg(2+). K(+) serves as cofactor. Post-translationally, conjugated to URM1, a ubiquitin-like protein, in response to oxidative stresses. The attachment of URM1 to lysine residues exclusively depends on the presence of a peroxidatic cysteine in the target protein, with low specificity for the particular residue, motif, or structural context at which urmylation can occur. The URM1-conjugation reaction is mechanistically and directly coupled to the process of cysteine persulfidation, transfering the sulfur atom of the URM1 thiocarboxyl group to redox-active cysteine residues in the target protein if it is exposed to oxidative conditions. Persulfidated on specific redox-active cysteine residues. Persulfidation (also called protein S-sulfhydration) may provide a molecular mechanism that enables cells to protect vulnerable cysteine residues from reactive oxygen species (ROS) under stress conditions.

It carries out the reaction pyruvate + ATP = phosphoenolpyruvate + ADP + H(+). It functions in the pathway carbohydrate degradation; glycolysis; pyruvate from D-glyceraldehyde 3-phosphate: step 5/5. With respect to regulation, the activity is regulated by glucose levels. Activated by fructose-1,6-bisphosphate. The protein is Pyruvate kinase 1 (CDC19) of Saccharomyces cerevisiae (strain ATCC 204508 / S288c) (Baker's yeast).